The chain runs to 200 residues: Recombination protein RecR (200 aa).

Residues 57-72 (CRQCRTLTEDDLCPQC) form a C4-type zinc finger. One can recognise a Toprim domain in the interval 80-175 (TLLCVVEGPM…IASRIAHGVP (96 aa)).

The protein belongs to the RecR family.

In terms of biological role, may play a role in DNA repair. It seems to be involved in an RecBC-independent recombinational process of DNA repair. It may act with RecF and RecO. The protein is Recombination protein RecR of Pseudomonas fluorescens (strain Pf0-1).